A 269-amino-acid chain; its full sequence is Regulating synaptic membrane exocytosis protein 4 (269 aa).

Positions 115 to 233 constitute a C2 domain; that stretch reads PMGDVEIGLQ…DLTTLAVGWY (119 aa). 2 positions are modified to phosphoserine: Ser-254 and Ser-257.

Binds PPFIA3. Does not bind RAB3.

It is found in the synapse. In terms of biological role, regulates synaptic membrane exocytosis. The chain is Regulating synaptic membrane exocytosis protein 4 (RIMS4) from Homo sapiens (Human).